An 80-amino-acid polypeptide reads, in one-letter code: uncharacterized protein (80 aa).

A signal peptide spans 1–21 (MKKVLYGIFAISALAATSAWA). Residues 59-80 (AATGGGDGSNTGTTTTTTTSTQ) form a disordered region. The span at 68–80 (NTGTTTTTTTSTQ) shows a compositional bias: low complexity.

This is an uncharacterized protein from Escherichia coli O157:H7.